Consider the following 125-residue polypeptide: Glycine cleavage system H protein (125 aa).

The Lipoyl-binding domain occupies 19-101 (GAVVGITDFA…NGSGWFFKLT (83 aa)). K60 is modified (N6-lipoyllysine).

This sequence belongs to the GcvH family. In terms of assembly, the glycine cleavage system is composed of four proteins: P, T, L and H. Requires (R)-lipoate as cofactor.

Its function is as follows. The glycine cleavage system catalyzes the degradation of glycine. The H protein shuttles the methylamine group of glycine from the P protein to the T protein. This is Glycine cleavage system H protein from Methylocella silvestris (strain DSM 15510 / CIP 108128 / LMG 27833 / NCIMB 13906 / BL2).